Here is a 49-residue protein sequence, read N- to C-terminus: Large ribosomal subunit protein bL33B (49 aa).

It belongs to the bacterial ribosomal protein bL33 family.

This chain is Large ribosomal subunit protein bL33B, found in Bacillus anthracis.